The sequence spans 181 residues: MASSIVSSAAVATRSNVAQASMVAPFTGLKSAASFPVTKKNNNVDITSLASNGGRVRCMQVWPPINMKKYETLSYLPDLSDEQLLKEVEYLLKNGWVPCLEFETEHGFVYREHNSSPGYYDGRYWTMWKLPMFGCTDGTQVLAEVQEAKNAYPQAWIRIIGFDNVRQVQCISFIAYKPEGY.

A chloroplast-targeting transit peptide spans 1 to 57 (MASSIVSSAAVATRSNVAQASMVAPFTGLKSAASFPVTKKNNNVDITSLASNGGRVR).

The protein belongs to the RuBisCO small chain family. Heterohexadecamer of 8 large and 8 small subunits.

It localises to the plastid. Its subcellular location is the chloroplast. Its function is as follows. RuBisCO catalyzes two reactions: the carboxylation of D-ribulose 1,5-bisphosphate, the primary event in carbon dioxide fixation, as well as the oxidative fragmentation of the pentose substrate. Both reactions occur simultaneously and in competition at the same active site. Although the small subunit is not catalytic it is essential for maximal activity. In Solanum tuberosum (Potato), this protein is Ribulose bisphosphate carboxylase small subunit, chloroplastic 1.